The following is a 329-amino-acid chain: D-lactate dehydrogenase (329 aa).

NAD(+) is bound by residues 154–155 (KI), Asp-174, 205–206 (CP), Asn-211, 232–234 (TSR), and Asp-258. Arg-234 is a catalytic residue. Glu-263 is a catalytic residue. His-295 serves as the catalytic Proton donor.

Belongs to the D-isomer specific 2-hydroxyacid dehydrogenase family.

It carries out the reaction (R)-lactate + NAD(+) = pyruvate + NADH + H(+). Fermentative lactate dehydrogenase. This Escherichia coli (strain K12) protein is D-lactate dehydrogenase (ldhA).